A 499-amino-acid polypeptide reads, in one-letter code: Glycerol kinase (499 aa).

T13 contributes to the ADP binding site. 3 residues coordinate ATP: T13, T14, and S15. T13 is a binding site for sn-glycerol 3-phosphate. An ADP-binding site is contributed by R17. Sn-glycerol 3-phosphate contacts are provided by R83, E84, Y135, and D245. Glycerol is bound by residues R83, E84, Y135, D245, and Q246. The ADP site is built by T267 and G310. ATP-binding residues include T267, G310, Q314, and A411. A411 and N415 together coordinate ADP.

The protein belongs to the FGGY kinase family.

The catalysed reaction is glycerol + ATP = sn-glycerol 3-phosphate + ADP + H(+). Its pathway is polyol metabolism; glycerol degradation via glycerol kinase pathway; sn-glycerol 3-phosphate from glycerol: step 1/1. Inhibited by fructose 1,6-bisphosphate (FBP). In terms of biological role, key enzyme in the regulation of glycerol uptake and metabolism. Catalyzes the phosphorylation of glycerol to yield sn-glycerol 3-phosphate. This chain is Glycerol kinase, found in Xylella fastidiosa (strain M23).